The following is a 560-amino-acid chain: Oxygen-dependent choline dehydrogenase (560 aa).

6 to 35 is a binding site for FAD; that stretch reads DYIIVGAGSAGCVLADRLSESGDHSVLLLE. The active-site Proton acceptor is His-470.

Belongs to the GMC oxidoreductase family. It depends on FAD as a cofactor.

It catalyses the reaction choline + A = betaine aldehyde + AH2. It carries out the reaction betaine aldehyde + NAD(+) + H2O = glycine betaine + NADH + 2 H(+). It participates in amine and polyamine biosynthesis; betaine biosynthesis via choline pathway; betaine aldehyde from choline (cytochrome c reductase route): step 1/1. In terms of biological role, involved in the biosynthesis of the osmoprotectant glycine betaine. Catalyzes the oxidation of choline to betaine aldehyde and betaine aldehyde to glycine betaine at the same rate. The protein is Oxygen-dependent choline dehydrogenase of Vibrio vulnificus (strain YJ016).